Here is a 345-residue protein sequence, read N- to C-terminus: 3-isopropylmalate dehydrogenase (345 aa).

74–87 lines the NAD(+) pocket; it reads GPKWDGLPRKIRPE. Substrate-binding residues include Arg-94, Arg-104, Arg-132, and Asp-217. Positions 217, 241, and 245 each coordinate Mg(2+). 274–286 is an NAD(+) binding site; it reads GSAPDIAGKGLAN.

It belongs to the isocitrate and isopropylmalate dehydrogenases family. LeuB type 1 subfamily. As to quaternary structure, homodimer. Requires Mg(2+) as cofactor. It depends on Mn(2+) as a cofactor.

It localises to the cytoplasm. It carries out the reaction (2R,3S)-3-isopropylmalate + NAD(+) = 4-methyl-2-oxopentanoate + CO2 + NADH. It participates in amino-acid biosynthesis; L-leucine biosynthesis; L-leucine from 3-methyl-2-oxobutanoate: step 3/4. Its function is as follows. Catalyzes the oxidation of 3-carboxy-2-hydroxy-4-methylpentanoate (3-isopropylmalate) to 3-carboxy-4-methyl-2-oxopentanoate. The product decarboxylates to 4-methyl-2 oxopentanoate. This chain is 3-isopropylmalate dehydrogenase (leuB), found in Thermus thermophilus (strain ATCC BAA-163 / DSM 7039 / HB27).